The sequence spans 435 residues: D-amino acid dehydrogenase (435 aa).

3–17 is a binding site for FAD; it reads VIVLGGGVLGVSTAW.

The protein belongs to the DadA oxidoreductase family. FAD is required as a cofactor.

It catalyses the reaction a D-alpha-amino acid + A + H2O = a 2-oxocarboxylate + AH2 + NH4(+). It functions in the pathway amino-acid degradation; D-alanine degradation; NH(3) and pyruvate from D-alanine: step 1/1. Its function is as follows. Oxidative deamination of D-amino acids. The chain is D-amino acid dehydrogenase from Chromobacterium violaceum (strain ATCC 12472 / DSM 30191 / JCM 1249 / CCUG 213 / NBRC 12614 / NCIMB 9131 / NCTC 9757 / MK).